The sequence spans 424 residues: Hemagglutinin-esterase (424 aa).

2 consecutive signal peptides follow at residues 1–16 and 1–18; these read MFLL…IIGS and MFLL…GSLG. Residues 7–127 are esterase domain 1; it reads FVLVSCIIGS…SNDIWMQNKG (121 aa). Residues 17–392 lie on the Virion surface side of the membrane; it reads LGFDNPPTNV…PICVYDPLPL (376 aa). Serine 40 (nucleophile) is an active-site residue. Residues cysteine 44 and cysteine 65 are joined by a disulfide bond. N-linked (GlcNAc...) asparagine; by host glycosylation is found at asparagine 54, asparagine 89, asparagine 153, asparagine 236, and asparagine 301. 3 disulfide bridges follow: cysteine 113/cysteine 162, cysteine 197/cysteine 276, and cysteine 205/cysteine 249. The tract at residues 128–266 is receptor binding; sequence LFYTQVYKNM…GNYLAISNEL (139 aa). Residues 267 to 379 are esterase domain 2; sequence LLTVPTKAIC…RCPTAADINT (113 aa). A disulfide bridge links cysteine 307 with cysteine 312. Residue asparagine 316 is glycosylated (N-linked (GlcNAc...) asparagine; by host). Catalysis depends on charge relay system residues aspartate 326 and histidine 329. A disulfide bond links cysteine 347 and cysteine 371. N-linked (GlcNAc...) asparagine; by host glycosylation occurs at asparagine 358. Residues 393–413 form a helical membrane-spanning segment; it reads ILLGILLGVAVIIIVVLLLYF. Topologically, residues 414-424 are intravirion; the sequence is MVDNGTRLHDA. Asparagine 417 is a glycosylation site (N-linked (GlcNAc...) asparagine; by host).

Belongs to the influenza type C/coronaviruses hemagglutinin-esterase family. In terms of assembly, homodimer; disulfide-linked. Forms a complex with the M protein in the pre-Golgi. Associates then with S-M complex to form a ternary complex S-M-HE. N-glycosylated in the host RER.

The protein resides in the virion membrane. Its subcellular location is the host cell membrane. It carries out the reaction N-acetyl-9-O-acetylneuraminate + H2O = N-acetylneuraminate + acetate + H(+). The catalysed reaction is N-acetyl-4-O-acetylneuraminate + H2O = N-acetylneuraminate + acetate + H(+). Functionally, structural protein that makes short spikes at the surface of the virus. Contains receptor binding and receptor-destroying activities. Mediates de-O-acetylation of N-acetyl-4-O-acetylneuraminic acid, which is probably the receptor determinant recognized by the virus on the surface of erythrocytes and susceptible cells. This receptor-destroying activity is important for virus release as it probably helps preventing self-aggregation and ensures the efficient spread of the progeny virus from cell to cell. May serve as a secondary viral attachment protein for initiating infection, the spike protein being the major one. May become a target for both the humoral and the cellular branches of the immune system. The polypeptide is Hemagglutinin-esterase (Bos taurus (Bovine)).